The sequence spans 372 residues: NAD(P)H-quinone oxidoreductase subunit 1 (372 aa).

8 helical membrane passes run 27 to 47 (IIWL…GVLV), 97 to 117 (ILFT…WLIV), 128 to 148 (VGIG…GLLM), 176 to 196 (LALS…IDIV), 204 to 224 (ILSW…ICAL), 266 to 286 (ILSA…PIPV), 308 to 328 (SIGI…AILL), and 347 to 367 (FLLP…LAFP).

The protein belongs to the complex I subunit 1 family. NDH-1 is composed of at least 11 different subunits.

The protein resides in the cellular thylakoid membrane. The enzyme catalyses a plastoquinone + NADH + (n+1) H(+)(in) = a plastoquinol + NAD(+) + n H(+)(out). It catalyses the reaction a plastoquinone + NADPH + (n+1) H(+)(in) = a plastoquinol + NADP(+) + n H(+)(out). Its function is as follows. NDH-1 shuttles electrons from an unknown electron donor, via FMN and iron-sulfur (Fe-S) centers, to quinones in the respiratory and/or the photosynthetic chain. The immediate electron acceptor for the enzyme in this species is believed to be plastoquinone. Couples the redox reaction to proton translocation, and thus conserves the redox energy in a proton gradient. This is NAD(P)H-quinone oxidoreductase subunit 1 from Prochlorococcus marinus (strain MIT 9312).